Here is a 411-residue protein sequence, read N- to C-terminus: Argininosuccinate lyase (411 aa).

It belongs to the lyase 1 family. Argininosuccinate lyase subfamily.

Its subcellular location is the cytoplasm. The catalysed reaction is 2-(N(omega)-L-arginino)succinate = fumarate + L-arginine. It functions in the pathway amino-acid biosynthesis; L-arginine biosynthesis; L-arginine from L-ornithine and carbamoyl phosphate: step 3/3. The sequence is that of Argininosuccinate lyase from Legionella pneumophila (strain Paris).